Here is a 121-residue protein sequence, read N- to C-terminus: UPF0102 protein HRM2_30940 (121 aa).

It belongs to the UPF0102 family.

This Desulforapulum autotrophicum (strain ATCC 43914 / DSM 3382 / VKM B-1955 / HRM2) (Desulfobacterium autotrophicum) protein is UPF0102 protein HRM2_30940.